An 84-amino-acid chain; its full sequence is Small ribosomal subunit protein uS17 (84 aa).

It belongs to the universal ribosomal protein uS17 family. In terms of assembly, part of the 30S ribosomal subunit.

Functionally, one of the primary rRNA binding proteins, it binds specifically to the 5'-end of 16S ribosomal RNA. In Vibrio vulnificus (strain CMCP6), this protein is Small ribosomal subunit protein uS17.